The sequence spans 93 residues: Large ribosomal subunit protein uL23cz/uL23cy (93 aa).

Belongs to the universal ribosomal protein uL23 family. In terms of assembly, part of the 50S ribosomal subunit.

It is found in the plastid. Its subcellular location is the chloroplast. In terms of biological role, binds to 23S rRNA. The sequence is that of Large ribosomal subunit protein uL23cz/uL23cy (rpl23-A) from Atropa belladonna (Belladonna).